Reading from the N-terminus, the 340-residue chain is Glyceraldehyde-3-phosphate dehydrogenase (340 aa).

NAD(+) is bound by residues T11–I12 and G109. Residue S138 to N140 participates in D-glyceraldehyde 3-phosphate binding. Catalysis depends on C139, which acts as the Nucleophile. R167 contacts NAD(+). H193–A194 serves as a coordination point for D-glyceraldehyde 3-phosphate. An NAD(+)-binding site is contributed by Q300.

Belongs to the glyceraldehyde-3-phosphate dehydrogenase family. Homotetramer.

It localises to the cytoplasm. The enzyme catalyses D-glyceraldehyde 3-phosphate + phosphate + NADP(+) = (2R)-3-phospho-glyceroyl phosphate + NADPH + H(+). The catalysed reaction is D-glyceraldehyde 3-phosphate + phosphate + NAD(+) = (2R)-3-phospho-glyceroyl phosphate + NADH + H(+). The protein operates within carbohydrate degradation; glycolysis; pyruvate from D-glyceraldehyde 3-phosphate: step 1/5. This Saccharolobus islandicus (strain L.S.2.15 / Lassen #1) (Sulfolobus islandicus) protein is Glyceraldehyde-3-phosphate dehydrogenase.